The chain runs to 502 residues: 2-isopropylmalate synthase (502 aa).

Asp1, His189, His191, and Asn225 together coordinate Mn(2+). A Pyruvate carboxyltransferase domain is found at 1–254; it reads DGEQALQASL…STNINHKEIY (254 aa). The tract at residues 379–502 is regulatory domain; it reads CLKFFSVQSI…VNKNLKNLKK (124 aa).

Belongs to the alpha-IPM synthase/homocitrate synthase family. LeuA type 1 subfamily. As to quaternary structure, homodimer. Mn(2+) is required as a cofactor.

The protein localises to the cytoplasm. The enzyme catalyses 3-methyl-2-oxobutanoate + acetyl-CoA + H2O = (2S)-2-isopropylmalate + CoA + H(+). Its pathway is amino-acid biosynthesis; L-leucine biosynthesis; L-leucine from 3-methyl-2-oxobutanoate: step 1/4. In terms of biological role, catalyzes the condensation of the acetyl group of acetyl-CoA with 3-methyl-2-oxobutanoate (2-ketoisovalerate) to form 3-carboxy-3-hydroxy-4-methylpentanoate (2-isopropylmalate). The polypeptide is 2-isopropylmalate synthase (Buchnera aphidicola subsp. Uroleucon sonchi).